The chain runs to 94 residues: Lipolysis-activating peptide 1-beta chain (94 aa).

The first 19 residues, 1–19 (MKILAVVLISVIVLNTANG), serve as a signal peptide directing secretion. One can recognise an LCN-type CS-alpha/beta domain in the interval 20–87 (ENYYPQKYTN…YFNALESQCP (68 aa)). 3 disulfides stabilise this stretch: Cys34/Cys56, Cys42/Cys66, and Cys46/Cys68.

It belongs to the long (3 C-C) scorpion toxin superfamily. Homodimer; disulfide-linked or monomer (edited version) or heterodimer of an alpha chain (AC P0CI44 or AC P0CI45) and this beta chain (non-edited version). Expressed by the venom gland.

The protein localises to the secreted. Functionally, the homodimer inhibits HMG-CoA reductase (HMGCR) (32% of inhibition produced by 0.6 uM), a glycoprotein involved in the control of cholesterol biosynthesis. The inhibitory effects of bumarsin are seen at much lower concentrations (0.6 uM) than that for statins such as atorvastatin (5 mM) and simvastatin (10 uM). In addition to inhibition of HMG-CoA reductase, this protein lowers cholesterol levels by inducing steroid hormone synthesis via StAR, and by increasing reverse cholesterol transport mediated by the induction of ABCA1 and APOA1. Its function is as follows. The heterodimer non-edited LVP1 induces lipolysis in rat adipocytes. Induction of lipolysis by LVP1 appears to be mediated through the beta-2 adrenergic receptor pathway (ADRB2). In terms of biological role, the monomer edited version, similar to alpha-toxins, may modulate voltage-gated sodium channels (Nav) and may block voltage-gated potassium channels (Kv). This is Lipolysis-activating peptide 1-beta chain from Lychas mucronatus (Chinese swimming scorpion).